The primary structure comprises 369 residues: Homoserine O-succinyltransferase (369 aa).

Residues 1-21 (MVRIVPSARRTRAPAKLDGRS) are disordered. The AB hydrolase-1 domain maps to 86–350 (VVFVAGGISA…PFGHDAFLKE (265 aa)). Residues 92 to 95 (GISA) form an important for substrate specificity region. Ser172 (nucleophile) is an active-site residue. Arg233 serves as a coordination point for substrate. Catalysis depends on residues Asp314 and His344. Asp345 is a substrate binding site.

This sequence belongs to the AB hydrolase superfamily. MetX family. As to quaternary structure, homodimer.

The protein resides in the cytoplasm. The enzyme catalyses L-homoserine + succinyl-CoA = O-succinyl-L-homoserine + CoA. It functions in the pathway amino-acid biosynthesis; L-methionine biosynthesis via de novo pathway; O-succinyl-L-homoserine from L-homoserine: step 1/1. In terms of biological role, transfers a succinyl group from succinyl-CoA to L-homoserine, forming succinyl-L-homoserine. This chain is Homoserine O-succinyltransferase, found in Xanthomonas campestris pv. campestris (strain ATCC 33913 / DSM 3586 / NCPPB 528 / LMG 568 / P 25).